Reading from the N-terminus, the 145-residue chain is Deoxyuridine 5'-triphosphate nucleotidohydrolase (145 aa).

Residues 65–67 (RSG), Asn78, 82–84 (TID), and Met92 each bind substrate.

The protein belongs to the dUTPase family. Mg(2+) is required as a cofactor.

It carries out the reaction dUTP + H2O = dUMP + diphosphate + H(+). Its pathway is pyrimidine metabolism; dUMP biosynthesis; dUMP from dCTP (dUTP route): step 2/2. Functionally, this enzyme is involved in nucleotide metabolism: it produces dUMP, the immediate precursor of thymidine nucleotides and it decreases the intracellular concentration of dUTP so that uracil cannot be incorporated into DNA. This is Deoxyuridine 5'-triphosphate nucleotidohydrolase from Chlorobium phaeobacteroides (strain BS1).